The primary structure comprises 146 residues: Hemoglobin subunit beta-2 (146 aa).

In terms of domain architecture, Globin spans 2–146; it reads FLSAEEKGLV…VASALAHRYH (145 aa). N6-succinyllysine is present on Lys17. Residues Ser44 and Ser50 each carry the phosphoserine modification. Lys59 is subject to N6-succinyllysine. Heme b contacts are provided by His63 and His92. Arg104 carries the post-translational modification Asymmetric dimethylarginine.

It belongs to the globin family. As to quaternary structure, heterotetramer of two alpha chains and two beta chains. In terms of tissue distribution, red blood cells.

Involved in oxygen transport from the lung to the various peripheral tissues. The protein is Hemoglobin subunit beta-2 (HBB2) of Panthera pardus saxicolor (Northern Persian leopard).